Reading from the N-terminus, the 541-residue chain is Eukaryotic translation initiation factor 3 subunit D-1 (541 aa).

Residues 98 to 136 (VQKPPHQRGRFRNMRGRGGRGRNPRGGLNNHHHHGMTTL) form a disordered region. The segment covering 100–120 (KPPHQRGRFRNMRGRGGRGRN) has biased composition (basic residues).

This sequence belongs to the eIF-3 subunit D family. In terms of assembly, component of the eukaryotic translation initiation factor 3 (eIF-3) complex. The eIF-3 complex interacts with pix.

The protein localises to the cytoplasm. Functionally, mRNA cap-binding component of the eukaryotic translation initiation factor 3 (eIF-3) complex, which is involved in protein synthesis of a specialized repertoire of mRNAs and, together with other initiation factors, stimulates binding of mRNA and methionyl-tRNAi to the 40S ribosome. The eIF-3 complex specifically targets and initiates translation of a subset of mRNAs involved in cell proliferation. In the eIF-3 complex, eif3d specifically recognizes and binds the 7-methylguanosine cap of a subset of mRNAs. The protein is Eukaryotic translation initiation factor 3 subunit D-1 of Drosophila persimilis (Fruit fly).